The primary structure comprises 333 residues: 6-phosphogluconolactonase (333 aa).

It belongs to the cycloisomerase 2 family.

The enzyme catalyses 6-phospho-D-glucono-1,5-lactone + H2O = 6-phospho-D-gluconate + H(+). Its pathway is carbohydrate degradation; pentose phosphate pathway; D-ribulose 5-phosphate from D-glucose 6-phosphate (oxidative stage): step 2/3. In terms of biological role, catalyzes the hydrolysis of 6-phosphogluconolactone to 6-phosphogluconate. In Yersinia enterocolitica serotype O:8 / biotype 1B (strain NCTC 13174 / 8081), this protein is 6-phosphogluconolactonase.